Consider the following 124-residue polypeptide: Small ribosomal subunit protein eS8 (124 aa).

Residues 1–22 (MQYQGRSKRSKTGARLRPRSKK) show a composition bias toward basic residues. 2 disordered regions span residues 1 to 40 (MQYQ…GEPR) and 102 to 124 (AGTA…RVDE). Residues 23-32 (SKSELGREPT) show a composition bias toward basic and acidic residues. A compositionally biased stretch (polar residues) spans 106 to 124 (RVTSRPGQDGQVNATRVDE).

This sequence belongs to the eukaryotic ribosomal protein eS8 family. As to quaternary structure, part of the 30S ribosomal subunit.

The protein is Small ribosomal subunit protein eS8 of Halobacterium salinarum (strain ATCC 29341 / DSM 671 / R1).